The following is a 377-amino-acid chain: Modification methylase CviBIII (377 aa).

It belongs to the N(4)/N(6)-methyltransferase family.

It carries out the reaction a 2'-deoxyadenosine in DNA + S-adenosyl-L-methionine = an N(6)-methyl-2'-deoxyadenosine in DNA + S-adenosyl-L-homocysteine + H(+). In terms of biological role, a gamma subtype methylase that recognizes the double-stranded sequence 5'-TCGA-3' and methylates A-4 on both strands. The sequence is that of Modification methylase CviBIII (CVIBIIIM) from Paramecium bursaria Chlorella virus NC1A (PBCV-NC1A).